Reading from the N-terminus, the 141-residue chain is Hemoglobin subunit alpha-A (141 aa).

Residues 1–141 form the Globin domain; the sequence is VLSGTDKTNV…VGAVLTAKYR (141 aa). His-58 lines the O2 pocket. His-87 contacts heme b.

This sequence belongs to the globin family. Heterotetramer of two alpha chains and two beta chains. In terms of tissue distribution, red blood cells.

Functionally, involved in oxygen transport from the lung to the various peripheral tissues. This chain is Hemoglobin subunit alpha-A (HBAA), found in Struthio camelus (Common ostrich).